The sequence spans 279 residues: Inhibitor of growth protein 1 (279 aa).

Residues 115-206 (AHQDISDGTG…EASPADLPID (92 aa)) are disordered. Lysine 135 is covalently cross-linked (Glycyl lysine isopeptide (Lys-Gly) (interchain with G-Cter in SUMO2)). Residues 154–171 (RNNENRENASNNHDHDDI) show a composition bias toward basic and acidic residues. A compositionally biased stretch (basic residues) spans 179 to 191 (KKAKTSKKKKRSK). Residues 210–259 (PTYCLCNQVSYGEMIGCDNDECPIEWFHFSCVGLNHKPKGKWYCPKCRGE) form a PHD-type zinc finger. Zn(2+)-binding residues include cysteine 213, cysteine 215, cysteine 226, cysteine 231, histidine 237, cysteine 240, cysteine 253, and cysteine 256. Positions 262–279 (KTMDKALEKSKKERAYNR) are PBR.

It belongs to the ING family. As to quaternary structure, interacts with H3K4me3 and to a lesser extent with H3K4me2. Isoform 2 interacts with RSL1D1. As to expression, in the adult, widely expressed with highest levels in thymus and testis.

It localises to the nucleus. Functionally, isoform 1 inhibits p53-dependent transcriptional activation and may function as an oncoprotein. Isoform 2 acts as a negative growth regulator by cooperating with p53 in transcriptional activation of p53-responsive genes and may act as a tumor suppressor. This is Inhibitor of growth protein 1 (Ing1) from Mus musculus (Mouse).